Consider the following 170-residue polypeptide: Sec-independent protein translocase protein TatB (170 aa).

Residues 1-21 form a helical membrane-spanning segment; that stretch reads MIDLGISKLALIGAVALIVIG.

It belongs to the TatB family. The Tat system comprises two distinct complexes: a TatABC complex, containing multiple copies of TatA, TatB and TatC subunits, and a separate TatA complex, containing only TatA subunits. Substrates initially bind to the TatABC complex, which probably triggers association of the separate TatA complex to form the active translocon.

The protein localises to the cell inner membrane. Part of the twin-arginine translocation (Tat) system that transports large folded proteins containing a characteristic twin-arginine motif in their signal peptide across membranes. Together with TatC, TatB is part of a receptor directly interacting with Tat signal peptides. TatB may form an oligomeric binding site that transiently accommodates folded Tat precursor proteins before their translocation. The polypeptide is Sec-independent protein translocase protein TatB (Cupriavidus necator (strain ATCC 17699 / DSM 428 / KCTC 22496 / NCIMB 10442 / H16 / Stanier 337) (Ralstonia eutropha)).